Consider the following 540-residue polypeptide: Sesquiterpene synthase 15b (540 aa).

Aspartate 292, aspartate 296, and glutamate 445 together coordinate Mg(2+). Positions 292 to 296 match the DDXXD motif motif; sequence DDIYD.

This sequence belongs to the terpene synthase family. Tpsa subfamily. It depends on Mg(2+) as a cofactor. The cofactor is Mn(2+).

It catalyses the reaction (2E,6E)-farnesyl diphosphate = germacrene A + diphosphate. It participates in secondary metabolite biosynthesis; terpenoid biosynthesis. In terms of biological role, sesquiterpene synthase involved in the biosynthesis of volatile compounds. Mediates the conversion of (2E,6E)-farnesyl diphosphate (FPP) into germacrene A. This chain is Sesquiterpene synthase 15b, found in Solanum habrochaites (Wild tomato).